We begin with the raw amino-acid sequence, 248 residues long: Protein GrpE (248 aa).

The segment at 229 to 248 is disordered; it reads AAPKEDTLPAQENQSSPADS. The span at 238-248 shows a compositional bias: polar residues; that stretch reads AQENQSSPADS.

The protein belongs to the GrpE family. Homodimer.

It localises to the cytoplasm. In terms of biological role, participates actively in the response to hyperosmotic and heat shock by preventing the aggregation of stress-denatured proteins, in association with DnaK and GrpE. It is the nucleotide exchange factor for DnaK and may function as a thermosensor. Unfolded proteins bind initially to DnaJ; upon interaction with the DnaJ-bound protein, DnaK hydrolyzes its bound ATP, resulting in the formation of a stable complex. GrpE releases ADP from DnaK; ATP binding to DnaK triggers the release of the substrate protein, thus completing the reaction cycle. Several rounds of ATP-dependent interactions between DnaJ, DnaK and GrpE are required for fully efficient folding. This is Protein GrpE from Nostoc sp. (strain PCC 7120 / SAG 25.82 / UTEX 2576).